Here is a 99-residue protein sequence, read N- to C-terminus: Small integral membrane protein 14 (99 aa).

Over 1-49 (MAEGGFDPCECICSHEHAMRRLINLLRQSQSYCTDTECLRELPGPSGDS) the chain is Lumenal. A helical transmembrane segment spans residues 50-70 (GISITVILMAWMVIAVLLFLL). Topologically, residues 71–99 (RPPNLRGSSLPGKPSSPHSGQDPPAPPVD) are cytoplasmic. The interval 77–99 (GSSLPGKPSSPHSGQDPPAPPVD) is disordered.

The protein resides in the endoplasmic reticulum membrane. The sequence is that of Small integral membrane protein 14 (Smim14) from Rattus norvegicus (Rat).